A 60-amino-acid chain; its full sequence is Large ribosomal subunit protein bL32 (60 aa).

The tract at residues 1–23 (MAVPRNRHSNARKNIRRSHHAKK) is disordered.

The protein belongs to the bacterial ribosomal protein bL32 family.

The polypeptide is Large ribosomal subunit protein bL32 (Chlamydia caviae (strain ATCC VR-813 / DSM 19441 / 03DC25 / GPIC) (Chlamydophila caviae)).